The following is a 430-amino-acid chain: Potassium channel subfamily K member 12 (430 aa).

Topologically, residues 1 to 38 (MSSRSPRPPPRRSRRRLPRPSCCCCCCRRSHLNEDTGR) are cytoplasmic. Residues 11–16 (RRSRRR) form an ER retention/retrieval signal region. Residues 39-59 (FVLLAALIGLYLVAGATVFSA) traverse the membrane as a helical segment. N-linked (GlcNAc...) asparagine glycosylation is present at asparagine 78. The segment at residues 114–134 (WDFPGAFYFVGTVVSTIGFGM) is an intramembrane region (pore-forming). K(+) is bound by residues threonine 129, isoleucine 130, and glycine 131. Residues 129–134 (TIGFGM) form a selectivity filter 1 region. A helical membrane pass occupies residues 145–165 (FLIAYGLFGCAGTILFFNLFL). Residues 166–212 (ERIISLLAFIMRACRERQLRRSGLLPATFRRGSALSEADSLAGWKPS) lie on the Cytoplasmic side of the membrane. Residues 213 to 233 (VYHVLLILGLFAVLLSCCASA) traverse the membrane as a helical segment. The segment at residues 243-263 (YVDSLYFCFVTFSTIGFGDLV) is an intramembrane region (pore-forming). K(+) contacts are provided by threonine 256, isoleucine 257, glycine 258, and phenylalanine 259. Positions 256-261 (TIGFGD) are selectivity filter 2. Residues 282 to 302 (LFILLGVCCIYSLFNVISILI) form a helical membrane-spanning segment. Over 303-430 (KQVLNWMLRK…NRLAETSASR (128 aa)) the chain is Cytoplasmic.

The protein belongs to the two pore domain potassium channel (TC 1.A.1.8) family. As to quaternary structure, homodimer. Heterodimer with KCNK13.

It is found in the cell membrane. The protein localises to the endoplasmic reticulum membrane. It carries out the reaction K(+)(in) = K(+)(out). K(+) channel subunit that may homo- and heterodimerize to form functional channels with distinct regulatory and gating properties. Can heterodimerize with KCNK13 subunit to conduct K(+) outward rectifying currents at the plasma membrane. The homodimers are mainly retained in the endoplasmic reticulum compartment and may be targeted to the cell surface upon phosphorylation or other activation signals yet to be elucidated. This Homo sapiens (Human) protein is Potassium channel subfamily K member 12.